The sequence spans 146 residues: Putative nickel-responsive regulator 1 (146 aa).

Residues His-81, His-92, Tyr-94, and Cys-100 each coordinate Ni(2+).

It belongs to the transcriptional regulatory CopG/NikR family. It depends on Ni(2+) as a cofactor.

In terms of biological role, transcriptional regulator. The protein is Putative nickel-responsive regulator 1 of Methanosarcina mazei (strain ATCC BAA-159 / DSM 3647 / Goe1 / Go1 / JCM 11833 / OCM 88) (Methanosarcina frisia).